We begin with the raw amino-acid sequence, 816 residues long: Fibroblast growth factor receptor 1 (816 aa).

The N-terminal stretch at 1–23 (MLSWRHLVFWAMLVMATLSAARP) is a signal peptide. Topologically, residues 24-374 (APTLPEQVSP…VIMTSPLYLE (351 aa)) are extracellular. One can recognise an Ig-like C2-type 1 domain in the interval 25–118 (PTLPEQVSPK…ETTFFAVNVS (94 aa)). The cysteines at positions 54 and 100 are disulfide-linked. Residues Asn-76 and Asn-116 are each glycosylated (N-linked (GlcNAc...) asparagine). Positions 118–152 (SDRIPSVEDDDDDDEKSSSEEKEAENSKPNPVAPF) are disordered. A compositionally biased stretch (basic and acidic residues) spans 133-143 (KSSSEEKEAEN). Ig-like C2-type domains follow at residues 156 to 244 (PEKM…YQLD) and 253 to 355 (PILQ…AWLT). Cys-176 and Cys-228 are oxidised to a cystine. Residues Asn-238, Asn-262, Asn-294, Asn-315, and Asn-328 are each glycosylated (N-linked (GlcNAc...) asparagine). A disulfide bridge links Cys-275 with Cys-339. A helical membrane pass occupies residues 375–395 (IIIYCTGAFLISCMLVTVIIY). At 396-816 (KMKNTTKKTD…QHANGGLKKR (421 aa)) the chain is on the cytoplasmic side. Tyr-459 is modified (phosphotyrosine; by autocatalysis). The Protein kinase domain maps to 474 to 763 (LILGKPLGEG…VAMTSNQEYL (290 aa)). ATP contacts are provided by residues 480-486 (LGEGCFG), Lys-510, 558-560 (EYA), and Asn-564. Phosphotyrosine; by autocatalysis occurs at positions 579 and 581. Asp-619 serves as the catalytic Proton acceptor. 2 residues coordinate ATP: Arg-623 and Asp-637. Phosphotyrosine; by autocatalysis is present on residues Tyr-649, Tyr-650, Tyr-726, and Tyr-762. The tract at residues 776-816 (FPDTRSSTCSSGEDSVFSHDPLPDEPCLPKYQHANGGLKKR) is disordered. Polar residues predominate over residues 779-788 (TRSSTCSSGE).

This sequence belongs to the protein kinase superfamily. Tyr protein kinase family. Fibroblast growth factor receptor subfamily. In terms of assembly, monomer. Homodimer after ligand binding. In terms of processing, autophosphorylated. Binding of FGF family members together with heparan sulfate proteoglycan or heparin promotes receptor dimerization and autophosphorylation on tyrosine residues. Autophosphorylation occurs in trans between the two FGFR molecules present in the dimer and proceeds in a highly ordered manner. Phosphotyrosine residues provide docking sites for interacting proteins and so are crucial for FGFR1 function and its regulation. Post-translationally, ubiquitinated. FGFR1 is rapidly ubiquitinated after autophosphorylation, leading to internalization and degradation. N-glycosylated in the endoplasmic reticulum. The N-glycan chains undergo further maturation to an Endo H-resistant form in the Golgi apparatus.

It localises to the cell membrane. The protein resides in the nucleus. Its subcellular location is the cytoplasm. The protein localises to the cytosol. It is found in the cytoplasmic vesicle. It carries out the reaction L-tyrosyl-[protein] + ATP = O-phospho-L-tyrosyl-[protein] + ADP + H(+). With respect to regulation, present in an inactive conformation in the absence of bound ligand. Ligand binding leads to dimerization and activation by sequential autophosphorylation on tyrosine residues. In terms of biological role, tyrosine-protein kinase that acts as a cell-surface receptor for fibroblast growth factors and plays an essential role in the regulation of embryonic development, cell proliferation, differentiation and migration. Required for normal mesoderm patterning and normal skeletogenesis. Phosphorylates PLCG1, FRS2, GAB1 and SHB. Ligand binding leads to the activation of several signaling cascades. Activation of PLCG1 leads to the production of the cellular signaling molecules diacylglycerol and inositol-1,4,5-trisphosphate. Phosphorylation of FRS2 triggers recruitment of GRB2, GAB1, PIK3R1 and SOS1, and mediates activation of RAS, MAPK1/ERK2, MAPK3/ERK1 and the MAP kinase signaling pathway, as well as of the AKT1 signaling pathway. Promotes phosphorylation of SHC1, STAT1 and PTPN11/SHP2. In the nucleus, enhances RPS6KA1 and CREB1 activity and contributes to the regulation of transcription. FGFR1 signaling is down-regulated by ubiquitination, internalization and degradation. The polypeptide is Fibroblast growth factor receptor 1 (FGFR1) (Pleurodeles waltl (Iberian ribbed newt)).